A 295-amino-acid chain; its full sequence is Protoheme IX farnesyltransferase (295 aa).

The next 9 helical transmembrane spans lie at Ile24–His44, Pro45–Ile65, Ser94–Val114, Ile117–Leu137, Asn144–Thr164, Ser171–Leu191, Lys216–Leu236, Leu240–Val260, and Met272–Ile292.

The protein belongs to the UbiA prenyltransferase family. Protoheme IX farnesyltransferase subfamily.

Its subcellular location is the cell membrane. It carries out the reaction heme b + (2E,6E)-farnesyl diphosphate + H2O = Fe(II)-heme o + diphosphate. The protein operates within porphyrin-containing compound metabolism; heme O biosynthesis; heme O from protoheme: step 1/1. In terms of biological role, converts heme B (protoheme IX) to heme O by substitution of the vinyl group on carbon 2 of heme B porphyrin ring with a hydroxyethyl farnesyl side group. The sequence is that of Protoheme IX farnesyltransferase from Wolbachia pipientis wMel.